A 531-amino-acid chain; its full sequence is Polyamine transporter PUT1 (531 aa).

Residues methionine 1–methionine 76 are disordered. Over residues serine 17–leucine 33 the composition is skewed to low complexity. Basic and acidic residues predominate over residues glycine 34–threonine 44. The next 12 helical transmembrane spans lie at valine 83–isoleucine 103, leucine 113–isoleucine 133, tyrosine 147–lysine 167, leucine 193–leucine 213, valine 224–leucine 244, tryptophan 262–glycine 284, alanine 296–threonine 316, alanine 341–alanine 361, threonine 391–phenylalanine 411, isoleucine 414–isoleucine 434, threonine 453–leucine 473, and leucine 476–leucine 496.

The protein belongs to the amino acid-polyamine-organocation (APC) superfamily. Polyamine:cation symporter (PHS) (TC 2.A.3.12) family. In terms of tissue distribution, expressed in seedling roots, leaves, stems, flowers and siliques.

It is found in the cell membrane. Functionally, cell membrane polyamine/proton symporter involved in the polyamine uptake in cells. Possesses high affinity for spermidine and lower affinity for spermine and putrescine. Transports paraquat, a polyamine analog, and thus confers sensitivity to this chemical which is used as a herbicide. In Oryza sativa subsp. japonica (Rice), this protein is Polyamine transporter PUT1 (PUT1).